A 166-amino-acid chain; its full sequence is NADPH-dependent 7-cyano-7-deazaguanine reductase (166 aa).

The active-site Thioimide intermediate is Cys-57. The Proton donor role is filled by Asp-64. Residues 79–81 (VES) and 98–99 (HE) contribute to the substrate site.

This sequence belongs to the GTP cyclohydrolase I family. QueF type 1 subfamily.

The protein resides in the cytoplasm. The catalysed reaction is 7-aminomethyl-7-carbaguanine + 2 NADP(+) = 7-cyano-7-deazaguanine + 2 NADPH + 3 H(+). It functions in the pathway tRNA modification; tRNA-queuosine biosynthesis. Catalyzes the NADPH-dependent reduction of 7-cyano-7-deazaguanine (preQ0) to 7-aminomethyl-7-deazaguanine (preQ1). The chain is NADPH-dependent 7-cyano-7-deazaguanine reductase from Staphylococcus epidermidis (strain ATCC 35984 / DSM 28319 / BCRC 17069 / CCUG 31568 / BM 3577 / RP62A).